The following is a 393-amino-acid chain: Peptidyl-prolyl cis-trans isomerase CYP7 (393 aa).

Positions 8–196 (YLDISIDKKP…SDVRISDCGV (189 aa)) constitute a PPIase cyclophilin-type domain. TPR repeat units follow at residues 240–273 (ANII…INEY), 292–325 (MKIY…DNVP), and 330–363 (AKAY…NPDD).

Interacts with RPD3 and CNS1.

The catalysed reaction is [protein]-peptidylproline (omega=180) = [protein]-peptidylproline (omega=0). PPIases accelerate the folding of proteins. It catalyzes the cis-trans isomerization of proline imidic peptide bonds in oligopeptides. Plays a major role in negative regulation of the heat shock transcription factor (HSF). The sequence is that of Peptidyl-prolyl cis-trans isomerase CYP7 (CPR7) from Saccharomyces cerevisiae (strain ATCC 204508 / S288c) (Baker's yeast).